Reading from the N-terminus, the 579-residue chain is uncharacterized protein (579 aa).

The tract at residues 1-100 is disordered; it reads MSGRRRNHPG…APPCGPYPGE (100 aa). A compositionally biased stretch (polar residues) spans 80–90; sequence GQQQSEPQHNS. A run of 11 helical transmembrane segments spans residues 148 to 168, 175 to 195, 206 to 226, 228 to 248, 279 to 299, 303 to 323, 378 to 398, 407 to 427, 448 to 468, 504 to 524, and 526 to 546; these read FAVD…AAAS, VALY…LIGP, VALA…IMNY, GATG…MMVL, VFGL…VEFV, LFKL…GALL, LWGN…PAFV, WVQL…NFAG, IAVT…MTTI, SEST…MVYT, and LWVG…QTVV.

It to M.tuberculosis Rv0876c.

It localises to the cell membrane. This is an uncharacterized protein from Mycobacterium leprae (strain TN).